Consider the following 364-residue polypeptide: Histidinol-phosphate aminotransferase (364 aa).

Lys-226 carries the N6-(pyridoxal phosphate)lysine modification.

Belongs to the class-II pyridoxal-phosphate-dependent aminotransferase family. Histidinol-phosphate aminotransferase subfamily. Homodimer. Pyridoxal 5'-phosphate is required as a cofactor.

The enzyme catalyses L-histidinol phosphate + 2-oxoglutarate = 3-(imidazol-4-yl)-2-oxopropyl phosphate + L-glutamate. Its pathway is amino-acid biosynthesis; L-histidine biosynthesis; L-histidine from 5-phospho-alpha-D-ribose 1-diphosphate: step 7/9. This is Histidinol-phosphate aminotransferase from Sulfurimonas denitrificans (strain ATCC 33889 / DSM 1251) (Thiomicrospira denitrificans (strain ATCC 33889 / DSM 1251)).